Consider the following 349-residue polypeptide: Variable large protein 19 (349 aa).

A signal peptide spans 1 to 18; sequence MRKRISAIIMTLFMVLVS. The N-palmitoyl cysteine moiety is linked to residue Cys-19. Cys-19 carries the S-diacylglycerol cysteine lipid modification.

It belongs to the variable large protein (Vlp) family. Gamma subfamily.

It localises to the cell outer membrane. The Vlp and Vsp proteins are antigenically distinct proteins, only one vlp or vsp gene is transcriptionally active at any one time. Switching between these genes is a mechanism of host immune response evasion. The chain is Variable large protein 19 from Borrelia hermsii.